Consider the following 654-residue polypeptide: 4-hydroxy-3-methylbut-2-en-1-yl diphosphate synthase (flavodoxin) (654 aa).

[4Fe-4S] cluster-binding residues include Cys557, Cys560, Cys591, and Glu598.

Belongs to the IspG family. The cofactor is [4Fe-4S] cluster.

The catalysed reaction is (2E)-4-hydroxy-3-methylbut-2-enyl diphosphate + oxidized [flavodoxin] + H2O + 2 H(+) = 2-C-methyl-D-erythritol 2,4-cyclic diphosphate + reduced [flavodoxin]. Its pathway is isoprenoid biosynthesis; isopentenyl diphosphate biosynthesis via DXP pathway; isopentenyl diphosphate from 1-deoxy-D-xylulose 5-phosphate: step 5/6. Functionally, converts 2C-methyl-D-erythritol 2,4-cyclodiphosphate (ME-2,4cPP) into 1-hydroxy-2-methyl-2-(E)-butenyl 4-diphosphate. This is 4-hydroxy-3-methylbut-2-en-1-yl diphosphate synthase (flavodoxin) from Protochlamydia amoebophila (strain UWE25).